We begin with the raw amino-acid sequence, 86 residues long: Replication regulatory protein repA2 (86 aa).

The segment covering 1–14 (MSQTENAVTSSLSQ) has biased composition (polar residues). The segment at 1–31 (MSQTENAVTSSLSQKRFVRRGKPMTDSEKQM) is disordered.

In terms of biological role, this protein is involved in the determination of copy number in gene replication. It binds to the repA promoter thus inhibiting the synthesis of the mRNA for the initiator protein RepA. This is Replication regulatory protein repA2 (repA2) from Escherichia coli.